Here is a 550-residue protein sequence, read N- to C-terminus: Zorya protein ZorA (550 aa).

3 helical membrane-spanning segments follow: residues 16 to 36, 52 to 72, and 92 to 112; these read TLIT…AWWC, LMGA…LLNF, and FITS…DAFF.

Belongs to the MotA family.

The protein resides in the cell inner membrane. In terms of biological role, component of antiviral defense system Zorya type II, composed of ZorA, ZorB and ZorE. Expression of Zorya type II in E.coli (strain MG1655) confers resistance to phages SECphi7 and T7. While most T7 infected Zorya-containing cells undergo abortive infection, a minority produce viable phage progeny. These eventually accumulate to a high multiplicity of infection, leading to culture collapse by 170 minutes after initial infection. ZorA and ZorB probably assemble in the cell inner membrane and exert their effect there. The protein is Zorya protein ZorA of Escherichia coli (strain ATCC 8739 / DSM 1576 / NBRC 3972 / NCIMB 8545 / WDCM 00012 / Crooks).